The chain runs to 296 residues: Light-independent protochlorophyllide reductase iron-sulfur ATP-binding protein (296 aa).

Residues 1–11 show a composition bias toward basic and acidic residues; sequence MTSTITRKEDG. The segment at 1–20 is disordered; it reads MTSTITRKEDGEGSVQVKQD. ATP is bound by residues 39–44 and Lys-68; that span reads GIGKST. Position 43 (Ser-43) interacts with Mg(2+). [4Fe-4S] cluster-binding residues include Cys-124 and Cys-158. 209 to 210 serves as a coordination point for ATP; that stretch reads NR.

The protein belongs to the NifH/BchL/ChlL family. As to quaternary structure, homodimer. Protochlorophyllide reductase is composed of three subunits; ChlL, ChlN and ChlB. The cofactor is [4Fe-4S] cluster.

The enzyme catalyses chlorophyllide a + oxidized 2[4Fe-4S]-[ferredoxin] + 2 ADP + 2 phosphate = protochlorophyllide a + reduced 2[4Fe-4S]-[ferredoxin] + 2 ATP + 2 H2O. Its pathway is porphyrin-containing compound metabolism; chlorophyll biosynthesis (light-independent). Its function is as follows. Component of the dark-operative protochlorophyllide reductase (DPOR) that uses Mg-ATP and reduced ferredoxin to reduce ring D of protochlorophyllide (Pchlide) to form chlorophyllide a (Chlide). This reaction is light-independent. The L component serves as a unique electron donor to the NB-component of the complex, and binds Mg-ATP. In Prochlorococcus marinus (strain NATL1A), this protein is Light-independent protochlorophyllide reductase iron-sulfur ATP-binding protein.